The chain runs to 321 residues: 1D-myo-inositol 2-acetamido-2-deoxy-alpha-D-glucopyranoside deacetylase (321 aa).

Zn(2+)-binding residues include histidine 15, aspartate 18, and histidine 150. Residues 280-321 (PEGERESDLFAGLPPATDGTGAAGAPSATGAANPADAEGGAA) are disordered. Low complexity predominate over residues 290–321 (AGLPPATDGTGAAGAPSATGAANPADAEGGAA).

It belongs to the MshB deacetylase family. Zn(2+) is required as a cofactor.

It catalyses the reaction 1D-myo-inositol 2-acetamido-2-deoxy-alpha-D-glucopyranoside + H2O = 1D-myo-inositol 2-amino-2-deoxy-alpha-D-glucopyranoside + acetate. Catalyzes the deacetylation of 1D-myo-inositol 2-acetamido-2-deoxy-alpha-D-glucopyranoside (GlcNAc-Ins) in the mycothiol biosynthesis pathway. The polypeptide is 1D-myo-inositol 2-acetamido-2-deoxy-alpha-D-glucopyranoside deacetylase (Streptomyces griseus subsp. griseus (strain JCM 4626 / CBS 651.72 / NBRC 13350 / KCC S-0626 / ISP 5235)).